The primary structure comprises 317 residues: MYTKIIGTGSYLPEEIRTNADLEKMVETTDEWIVTRTGIRERRIAAPDENVATMGYRAAQKALEMANVDASEVGLLIVATTSSSHAFPSSACQVQQLLGIKDTIAFDLAAACAGFTYALSVADQYVKSGAVKYALVIGSDTLSRTLDPEDRGTLILFGDGAGAVLLTTSEQPGILSTHLHADGRYGELLTLPHQDRNHTDKPAYLTMAGNEVFKVAVTELAHIVEETLQAAQLDKSELDWLVPHQANLRIISATAKKLGMGMDKVVVTLDRHGNTSAASVPSALDEAVRDGRIKPGQLVLLEAFGGGFTWGSALVRF.

Catalysis depends on residues Cys112 and His244. The interval 245–249 is ACP-binding; it reads QANLR. Residue Asn274 is part of the active site.

The protein belongs to the thiolase-like superfamily. FabH family. In terms of assembly, homodimer.

The protein localises to the cytoplasm. The catalysed reaction is malonyl-[ACP] + acetyl-CoA + H(+) = 3-oxobutanoyl-[ACP] + CO2 + CoA. Its pathway is lipid metabolism; fatty acid biosynthesis. In terms of biological role, catalyzes the condensation reaction of fatty acid synthesis by the addition to an acyl acceptor of two carbons from malonyl-ACP. Catalyzes the first condensation reaction which initiates fatty acid synthesis and may therefore play a role in governing the total rate of fatty acid production. Possesses both acetoacetyl-ACP synthase and acetyl transacylase activities. Its substrate specificity determines the biosynthesis of branched-chain and/or straight-chain of fatty acids. This is Beta-ketoacyl-[acyl-carrier-protein] synthase III from Pectobacterium atrosepticum (strain SCRI 1043 / ATCC BAA-672) (Erwinia carotovora subsp. atroseptica).